The sequence spans 379 residues: Ribosomal RNA large subunit methyltransferase G (379 aa).

Belongs to the methyltransferase superfamily. RlmG family.

Its subcellular location is the cytoplasm. The catalysed reaction is guanosine(1835) in 23S rRNA + S-adenosyl-L-methionine = N(2)-methylguanosine(1835) in 23S rRNA + S-adenosyl-L-homocysteine + H(+). Functionally, specifically methylates the guanine in position 1835 (m2G1835) of 23S rRNA. This is Ribosomal RNA large subunit methyltransferase G from Serratia proteamaculans (strain 568).